Here is a 361-residue protein sequence, read N- to C-terminus: MSASSSAISPSASHLGADPKIVRRLSSVSHIILVLSGKGGVGKSSVSAQLALSLSSSASPSDRSRMARVGILDIDLTGPSIPRMLGLGGASVKQSTDGWVPVYTDASQHLAVMSVGFLLRSKNDSVVWRGPKKNAMIKQFLGDVRWGTLDYLIIDTPPGTSDEHISILEYLRTFEPAAVMVTTPQAVSLADNLRSLDFCRKTSLPVLGLIENMSGYICPHCNDCTNVWGKGGGEALAKREGLRFLGRIPIDPGLVRVLDDAKDDAHVELQKQLHQTSLNDNVLKAIDQPLTPHSQSAAAQLPNSGDTESLTPAGTMLSRTTIQRYKNSLTFPIFQEITDQIRDLATKHKLHPQSSVLTTAL.

37–44 (GKGGVGKS) contributes to the ATP binding site. Positions 218 and 221 each coordinate [4Fe-4S] cluster. The disordered stretch occupies residues 293–314 (HSQSAAAQLPNSGDTESLTPAG).

It belongs to the Mrp/NBP35 ATP-binding proteins family. NUBP2/CFD1 subfamily. Heterotetramer of 2 NBP35 and 2 CFD1 chains. [4Fe-4S] cluster is required as a cofactor.

The protein localises to the cytoplasm. Its function is as follows. Component of the cytosolic iron-sulfur (Fe/S) protein assembly (CIA) machinery. Required for maturation of extramitochondrial Fe-S proteins. The NBP35-CFD1 heterotetramer forms a Fe-S scaffold complex, mediating the de novo assembly of an Fe-S cluster and its transfer to target apoproteins. The protein is Cytosolic Fe-S cluster assembly factor CFD1 of Mycosarcoma maydis (Corn smut fungus).